Here is a 344-residue protein sequence, read N- to C-terminus: Geranylgeranyl transferase type-2 subunit alpha (344 aa).

6 PFTA repeats span residues 44 to 78 (YSEG…NDVF), 89 to 123 (LLDN…NAPY), 125 to 159 (NWNY…QIER), 165 to 199 (LAKK…TILN), 214 to 248 (ILEQ…HCNP), and 266 to 293 (YLQK…SLVN).

It belongs to the protein prenyltransferase subunit alpha family. Heterodimer of an alpha and a beta subunit.

The catalysed reaction is geranylgeranyl diphosphate + L-cysteinyl-[protein] = S-geranylgeranyl-L-cysteinyl-[protein] + diphosphate. Functionally, catalyzes the transfer of a geranyl-geranyl moiety from geranyl-geranyl pyrophosphate to proteins having the C-terminal-XCC or -XCXC, where both cysteines may become modified. The sequence is that of Geranylgeranyl transferase type-2 subunit alpha (bet4) from Schizosaccharomyces pombe (strain 972 / ATCC 24843) (Fission yeast).